A 354-amino-acid chain; its full sequence is Probable L-ascorbate-6-phosphate lactonase UlaG (354 aa).

It belongs to the UlaG family. A divalent metal cation serves as cofactor.

It is found in the cytoplasm. The catalysed reaction is L-ascorbate 6-phosphate + H2O = 3-dehydro-L-gulonate 6-phosphate. It functions in the pathway cofactor degradation; L-ascorbate degradation; D-xylulose 5-phosphate from L-ascorbate: step 1/4. Functionally, probably catalyzes the hydrolysis of L-ascorbate-6-P into 3-keto-L-gulonate-6-P. Is essential for L-ascorbate utilization under anaerobic conditions. This Shigella boydii serotype 4 (strain Sb227) protein is Probable L-ascorbate-6-phosphate lactonase UlaG.